A 176-amino-acid chain; its full sequence is Peptide deformylase (176 aa).

Fe cation-binding residues include C100 and H142. E143 is an active-site residue. Residue H146 participates in Fe cation binding.

This sequence belongs to the polypeptide deformylase family. Fe(2+) serves as cofactor.

It catalyses the reaction N-terminal N-formyl-L-methionyl-[peptide] + H2O = N-terminal L-methionyl-[peptide] + formate. Removes the formyl group from the N-terminal Met of newly synthesized proteins. Requires at least a dipeptide for an efficient rate of reaction. N-terminal L-methionine is a prerequisite for activity but the enzyme has broad specificity at other positions. The chain is Peptide deformylase from Elusimicrobium minutum (strain Pei191).